The following is a 468-amino-acid chain: 3-isopropylmalate dehydratase large subunit (468 aa).

3 residues coordinate [4Fe-4S] cluster: C347, C407, and C410.

Belongs to the aconitase/IPM isomerase family. LeuC type 1 subfamily. As to quaternary structure, heterodimer of LeuC and LeuD. It depends on [4Fe-4S] cluster as a cofactor.

The enzyme catalyses (2R,3S)-3-isopropylmalate = (2S)-2-isopropylmalate. It participates in amino-acid biosynthesis; L-leucine biosynthesis; L-leucine from 3-methyl-2-oxobutanoate: step 2/4. In terms of biological role, catalyzes the isomerization between 2-isopropylmalate and 3-isopropylmalate, via the formation of 2-isopropylmaleate. This is 3-isopropylmalate dehydratase large subunit from Synechococcus sp. (strain CC9311).